We begin with the raw amino-acid sequence, 893 residues long: TBC domain-containing protein kinase-like protein (893 aa).

Residues 1 to 274 (MFPLRDTEMG…EELMHDHLFS (274 aa)) form the Protein kinase domain. The Rab-GAP TBC domain occupies 466 to 651 (DIPPLLRGIT…HLWDTLLLGN (186 aa)). In terms of domain architecture, Rhodanese spans 790 to 889 (SKPKLLVVDI…IKPTGLLTVP (100 aa)).

This sequence belongs to the protein kinase superfamily. In terms of assembly, component of the FERRY complex.

It is found in the cytoplasm. Its subcellular location is the cytoskeleton. It localises to the spindle. The protein resides in the midbody. The protein localises to the early endosome. Its function is as follows. Component of the FERRY complex (Five-subunit Endosomal Rab5 and RNA/ribosome intermediary). The FERRY complex directly interacts with mRNAs and RAB5A, and functions as a RAB5A effector involved in the localization and the distribution of specific mRNAs most likely by mediating their endosomal transport. The complex recruits mRNAs and ribosomes to early endosomes through direct mRNA-interaction. Also involved in the modulation of mTOR signaling and expression of mTOR complex components. Involved in the control of actin-cytoskeleton organization. The sequence is that of TBC domain-containing protein kinase-like protein from Gallus gallus (Chicken).